A 237-amino-acid chain; its full sequence is UPF0280 protein Mbur_0309 (237 aa).

It belongs to the UPF0280 family.

The protein is UPF0280 protein Mbur_0309 of Methanococcoides burtonii (strain DSM 6242 / NBRC 107633 / OCM 468 / ACE-M).